The following is a 406-amino-acid chain: Cysteine desulfurase (406 aa).

At K226 the chain carries N6-(pyridoxal phosphate)lysine. Residue C364 is the Cysteine persulfide intermediate of the active site.

It belongs to the class-V pyridoxal-phosphate-dependent aminotransferase family. Csd subfamily. As to quaternary structure, homodimer. Interacts with SufE and the SufBCD complex composed of SufB, SufC and SufD. The interaction with SufE is required to mediate the direct transfer of the sulfur atom from the S-sulfanylcysteine. Requires pyridoxal 5'-phosphate as cofactor.

It is found in the cytoplasm. It carries out the reaction (sulfur carrier)-H + L-cysteine = (sulfur carrier)-SH + L-alanine. The catalysed reaction is L-selenocysteine + AH2 = hydrogenselenide + L-alanine + A + H(+). Its pathway is cofactor biosynthesis; iron-sulfur cluster biosynthesis. Cysteine desulfurases mobilize the sulfur from L-cysteine to yield L-alanine, an essential step in sulfur metabolism for biosynthesis of a variety of sulfur-containing biomolecules. Component of the suf operon, which is activated and required under specific conditions such as oxidative stress and iron limitation. Acts as a potent selenocysteine lyase in vitro, that mobilizes selenium from L-selenocysteine. Selenocysteine lyase activity is however unsure in vivo. The sequence is that of Cysteine desulfurase from Escherichia coli O9:H4 (strain HS).